Reading from the N-terminus, the 692-residue chain is Protein arginine N-methyltransferase 7 (692 aa).

SAM-dependent MTase PRMT-type domains follow at residues 14–359 (ENSW…YSLW) and 368–692 (AKTV…QEKR).

Belongs to the class I-like SAM-binding methyltransferase superfamily. Protein arginine N-methyltransferase family. PRMT7 subfamily.

In terms of biological role, essential arginine methyltransferase that can both catalyze the formation of omega-N monomethylarginine (MMA) and symmetrical dimethylarginine (sDMA). Specifically mediates the symmetrical dimethylation of arginine residues in the small nuclear ribonucleoproteins SmD1 and SmD3. The chain is Protein arginine N-methyltransferase 7 (Art7) from Drosophila pseudoobscura pseudoobscura (Fruit fly).